The sequence spans 393 residues: S-adenosylmethionine synthase (393 aa).

Glu-9 serves as a coordination point for Mg(2+). Residue His-15 participates in ATP binding. Residue Glu-43 participates in K(+) binding. L-methionine is bound by residues Glu-56 and Gln-99. Residues 167 to 169 (DGK), 235 to 238 (SGRF), Asp-246, 252 to 253 (RK), Ala-269, Lys-273, and Lys-277 contribute to the ATP site. Asp-246 contacts L-methionine. An L-methionine-binding site is contributed by Lys-277.

Belongs to the AdoMet synthase family. In terms of assembly, homotetramer. It depends on Mn(2+) as a cofactor. Requires Mg(2+) as cofactor. Co(2+) is required as a cofactor. K(+) serves as cofactor.

It localises to the cytoplasm. It carries out the reaction L-methionine + ATP + H2O = S-adenosyl-L-methionine + phosphate + diphosphate. Its pathway is amino-acid biosynthesis; S-adenosyl-L-methionine biosynthesis; S-adenosyl-L-methionine from L-methionine: step 1/1. Catalyzes the formation of S-adenosylmethionine from methionine and ATP. The reaction comprises two steps that are both catalyzed by the same enzyme: formation of S-adenosylmethionine (AdoMet) and triphosphate, and subsequent hydrolysis of the triphosphate. In Gossypium hirsutum (Upland cotton), this protein is S-adenosylmethionine synthase (SAMS).